The sequence spans 1957 residues: Sporulation-specific protein 15 (1957 aa).

Composition is skewed to low complexity over residues 1–12 (MSNQSSSGSNTS) and 19–28 (ASSLVSSAAS). Residues 1–102 (MSNQSSSGSN…STASSALPLT (102 aa)) are disordered. Positions 58–83 (SQHEDSSEELKRQEVRGMRRHSDLSI) are enriched in basic and acidic residues. Residues 90–102 (SEGSTASSALPLT) show a composition bias toward polar residues. Phosphoserine is present on S105. Coiled-coil stretches lie at residues 199-785 (KQSE…FTSL), 804-1235 (VNMQ…DLLD), 1320-1471 (KVVA…SLDD), and 1481-1723 (EKLG…EQHE).

The protein belongs to the MPC70 family. Monomer.

It localises to the cytoplasm. Its subcellular location is the cytoskeleton. The protein localises to the microtubule organizing center. The protein resides in the spindle pole body. Has a role in the initiation of spore membrane formation. This Schizosaccharomyces pombe (strain 972 / ATCC 24843) (Fission yeast) protein is Sporulation-specific protein 15 (spo15).